The primary structure comprises 199 residues: Small heat shock protein hspG4 (199 aa).

A sHSP domain is found at 30–199 (NKRVDIIPSM…SSNTIKININ (170 aa)). The segment at 83 to 105 (KNQQQQQQQQQLENSNNKENDEP) is disordered.

The protein belongs to the small heat shock protein (HSP20) family.

The polypeptide is Small heat shock protein hspG4 (hspG4) (Dictyostelium discoideum (Social amoeba)).